Here is a 55-residue protein sequence, read N- to C-terminus: Photosystem I reaction center subunit IX (55 aa).

The chain crosses the membrane as a helical span at residues 7 to 27; that stretch reads YLSVAPVLSTLWFGSLAGLLI.

It belongs to the PsaJ family.

Its subcellular location is the plastid. The protein localises to the chloroplast thylakoid membrane. In terms of biological role, may help in the organization of the PsaE and PsaF subunits. This chain is Photosystem I reaction center subunit IX, found in Gossypium barbadense (Sea Island cotton).